A 69-amino-acid chain; its full sequence is Disintegrin VLO5B (69 aa).

The Disintegrin domain occupies 1 to 66 (MNSANPCCDP…DCPRNPWKSE (66 aa)). 4 disulfides stabilise this stretch: C7–C30, C21–C27, C26–C51, and C39–C58. A Cell attachment site; atypical (MLD) motif is present at residues 43–45 (MLD).

The protein belongs to the disintegrin family. Dimeric disintegrin subfamily. In terms of assembly, heterodimer with VLO5A; disulfide-linked. Expressed by the venom gland.

The protein resides in the secreted. Functionally, poor inhibitor of platelet aggregation. The disintegrin inhibits the adhesion of the alpha-4/beta-1 (ITGA4/ITGB1) integrin to VCAM-1. Inhibition on alpha-2b/beta-3 (ITGA2B/ITGB3) is low. This Macrovipera lebetina obtusa (Levant blunt-nosed viper) protein is Disintegrin VLO5B.